The sequence spans 349 residues: MNIKTALSRIVDHLDLSTDEMRDVMREIMTGQCTDAQIGAFMMAMRMKSESIDEIVGAVSVMRELADKVELKTLDRVVDVVGTGGDGANIFNVSTASSFVVAAAGCTVAKHGNRAVSGKSGSADLLEAAGIYLNLTPVQVARCIDNVGIGFMFAQTHHKAMKYAAGPRRDLGLRTLFNMLGPLTNPAGVKHQVVGVFTPALCRPLAEVLQRLGSKHVLVVHSKDGLDEFSLAAPTFVAELKDDQITEYWVEPEDLGMKSQSLHGLSVEGPEASLALIRDALGKRKTENGQKAAEMIVLNAGAALYAADLATSLKEGVALAHDALHTGLAREKLEELGAFTAVFKVENEG.

5-phospho-alpha-D-ribose 1-diphosphate is bound by residues Gly-82, 85–86 (GD), 92–95 (NVST), 110–118 (KHGNRAVSG), and Ser-122. An anthranilate-binding site is contributed by Gly-82. Ser-94 is a binding site for Mg(2+). Anthranilate is bound at residue Asn-113. Arg-168 is an anthranilate binding site. Asp-227 and Glu-228 together coordinate Mg(2+).

This sequence belongs to the anthranilate phosphoribosyltransferase family. As to quaternary structure, homodimer. The cofactor is Mg(2+).

It carries out the reaction N-(5-phospho-beta-D-ribosyl)anthranilate + diphosphate = 5-phospho-alpha-D-ribose 1-diphosphate + anthranilate. It participates in amino-acid biosynthesis; L-tryptophan biosynthesis; L-tryptophan from chorismate: step 2/5. Catalyzes the transfer of the phosphoribosyl group of 5-phosphorylribose-1-pyrophosphate (PRPP) to anthranilate to yield N-(5'-phosphoribosyl)-anthranilate (PRA). The chain is Anthranilate phosphoribosyltransferase from Pseudomonas fluorescens (strain Pf0-1).